Here is a 170-residue protein sequence, read N- to C-terminus: Acireductone dioxygenase (170 aa).

4 residues coordinate Fe(2+): H99, H101, E105, and H144. Ni(2+) is bound by residues H99, H101, E105, and H144.

This sequence belongs to the acireductone dioxygenase (ARD) family. As to quaternary structure, monomer. Fe(2+) is required as a cofactor. The cofactor is Ni(2+).

It catalyses the reaction 1,2-dihydroxy-5-(methylsulfanyl)pent-1-en-3-one + O2 = 3-(methylsulfanyl)propanoate + CO + formate + 2 H(+). It carries out the reaction 1,2-dihydroxy-5-(methylsulfanyl)pent-1-en-3-one + O2 = 4-methylsulfanyl-2-oxobutanoate + formate + 2 H(+). The protein operates within amino-acid biosynthesis; L-methionine biosynthesis via salvage pathway; L-methionine from S-methyl-5-thio-alpha-D-ribose 1-phosphate: step 5/6. Functionally, catalyzes 2 different reactions between oxygen and the acireductone 1,2-dihydroxy-3-keto-5-methylthiopentene (DHK-MTPene) depending upon the metal bound in the active site. Fe-containing acireductone dioxygenase (Fe-ARD) produces formate and 2-keto-4-methylthiobutyrate (KMTB), the alpha-ketoacid precursor of methionine in the methionine recycle pathway. Ni-containing acireductone dioxygenase (Ni-ARD) produces methylthiopropionate, carbon monoxide and formate, and does not lie on the methionine recycle pathway. In Bacillus anthracis, this protein is Acireductone dioxygenase.